Reading from the N-terminus, the 312-residue chain is Ribosomal RNA small subunit methyltransferase H (312 aa).

S-adenosyl-L-methionine-binding positions include glycine 34–histidine 36, aspartate 54, leucine 83, aspartate 99, and glutamine 106.

This sequence belongs to the methyltransferase superfamily. RsmH family.

It is found in the cytoplasm. The catalysed reaction is cytidine(1402) in 16S rRNA + S-adenosyl-L-methionine = N(4)-methylcytidine(1402) in 16S rRNA + S-adenosyl-L-homocysteine + H(+). Its function is as follows. Specifically methylates the N4 position of cytidine in position 1402 (C1402) of 16S rRNA. The protein is Ribosomal RNA small subunit methyltransferase H of Rubrobacter xylanophilus (strain DSM 9941 / JCM 11954 / NBRC 16129 / PRD-1).